The sequence spans 676 residues: Lon-like protease BrxL (676 aa).

This sequence belongs to the BrxL family.

Its function is as follows. BREX systems (bacteriophage exclusion) provide immunity against bacteriophage. Part of a type 1 BREX system. This system allows phage adsorption but prevents phage DNA replication, without degradation of the phage DNA. Methylation of bacterial DNA by PglX probably guides self/non-self discrimination. When the brxA-brxB-brxC-pglX and pglZ-brxL operons are transformed into a susceptible B.subtilis strain (BEST7003) they confer resistance to bacteriophages SPbeta, SP16, Zeta, phi3T and SP02 and partial protection to phages SP01 and SP82G (these include lytic and temperate phage). They do not protect against phages phi105, rho10 or rho14. Additionally confers a very slight reduction in efficiency of plasmid transformation. The chain is Lon-like protease BrxL from Bacillus cereus (strain H3081.97).